Consider the following 382-residue polypeptide: RNA exonuclease 3 (382 aa).

An Exonuclease domain is found at 223 to 369 (VLALDCEMAY…EDAIAAMDVV (147 aa)).

Belongs to the REXO1/REXO3 family.

The protein resides in the cytoplasm. Its subcellular location is the nucleus. Functionally, 3' to 5' exoribonuclease required for proper 3' end maturation of MRP RNA and of the U5L snRNA. This chain is RNA exonuclease 3 (REX3), found in Eremothecium gossypii (strain ATCC 10895 / CBS 109.51 / FGSC 9923 / NRRL Y-1056) (Yeast).